Consider the following 209-residue polypeptide: MAPRQQPRRIARELALLSLSQIKGKAEKLDKVELNDLTLAAIRALTSEVQDTLETASAEVKRGHNQLFQYETKATTLESAKTMIKDALTLTQEAINRLANAIEFPEIIQLASQYEVREYAIELIGTINRRRKEIDEQLEAVLKDWQLKRLAKIDQDILRLAVAEILFLDVPEKVSINEAVELAKRYSDDDGYRFINGVLRRFTDHIKHN.

Belongs to the NusB family.

Involved in transcription antitermination. Required for transcription of ribosomal RNA (rRNA) genes. Binds specifically to the boxA antiterminator sequence of the ribosomal RNA (rrn) operons. The polypeptide is Transcription antitermination protein NusB (Crocosphaera subtropica (strain ATCC 51142 / BH68) (Cyanothece sp. (strain ATCC 51142))).